We begin with the raw amino-acid sequence, 128 residues long: NADPH-dependent 7-cyano-7-deazaguanine reductase (128 aa).

Cysteine 34 acts as the Thioimide intermediate in catalysis. Residue aspartate 41 is the Proton donor of the active site. Substrate contacts are provided by residues 56–58 (VEL) and 75–76 (HE).

The protein belongs to the GTP cyclohydrolase I family. QueF type 1 subfamily.

The protein localises to the cytoplasm. It catalyses the reaction 7-aminomethyl-7-carbaguanine + 2 NADP(+) = 7-cyano-7-deazaguanine + 2 NADPH + 3 H(+). It functions in the pathway tRNA modification; tRNA-queuosine biosynthesis. Functionally, catalyzes the NADPH-dependent reduction of 7-cyano-7-deazaguanine (preQ0) to 7-aminomethyl-7-deazaguanine (preQ1). In Thermomicrobium roseum (strain ATCC 27502 / DSM 5159 / P-2), this protein is NADPH-dependent 7-cyano-7-deazaguanine reductase.